Here is a 441-residue protein sequence, read N- to C-terminus: 4-hydroxy-3-methylbut-2-en-1-yl diphosphate synthase (flavodoxin) (441 aa).

Residues C320, C323, C366, and E373 each contribute to the [4Fe-4S] cluster site.

This sequence belongs to the IspG family. It depends on [4Fe-4S] cluster as a cofactor.

It carries out the reaction (2E)-4-hydroxy-3-methylbut-2-enyl diphosphate + oxidized [flavodoxin] + H2O + 2 H(+) = 2-C-methyl-D-erythritol 2,4-cyclic diphosphate + reduced [flavodoxin]. The protein operates within isoprenoid biosynthesis; isopentenyl diphosphate biosynthesis via DXP pathway; isopentenyl diphosphate from 1-deoxy-D-xylulose 5-phosphate: step 5/6. Its function is as follows. Converts 2C-methyl-D-erythritol 2,4-cyclodiphosphate (ME-2,4cPP) into 1-hydroxy-2-methyl-2-(E)-butenyl 4-diphosphate. The chain is 4-hydroxy-3-methylbut-2-en-1-yl diphosphate synthase (flavodoxin) from Rhodopseudomonas palustris (strain ATCC BAA-98 / CGA009).